A 221-amino-acid polypeptide reads, in one-letter code: Probable nicotinate-nucleotide adenylyltransferase (221 aa).

This sequence belongs to the NadD family.

It carries out the reaction nicotinate beta-D-ribonucleotide + ATP + H(+) = deamido-NAD(+) + diphosphate. It participates in cofactor biosynthesis; NAD(+) biosynthesis; deamido-NAD(+) from nicotinate D-ribonucleotide: step 1/1. Functionally, catalyzes the reversible adenylation of nicotinate mononucleotide (NaMN) to nicotinic acid adenine dinucleotide (NaAD). The sequence is that of Probable nicotinate-nucleotide adenylyltransferase from Marinomonas sp. (strain MWYL1).